The sequence spans 503 residues: Maturase K (503 aa).

It belongs to the intron maturase 2 family. MatK subfamily.

The protein localises to the plastid. It is found in the chloroplast. In terms of biological role, usually encoded in the trnK tRNA gene intron. Probably assists in splicing its own and other chloroplast group II introns. This is Maturase K from Backhousia myrtifolia (Grey myrtle).